A 90-amino-acid chain; its full sequence is uncharacterized protein (90 aa).

This is an uncharacterized protein from Homo sapiens (Human).